The sequence spans 556 residues: MPVNLGQALGLLPFLAKAEDATFSGSDVIQQRELANPETARQLFRQFRYQVMSGPQETLRQLRKLCFQWLRPEVHTKEQILEILMLEQFLTILPGEIQMWVRKQCPGSGEEAVTLVESLKGDPQKLWQWISIQVLGQEIPFEKENSARCRGDKVEPALEAEPTVEVVPQDLPLQNTSSAPGELLSHGVKEESDLEPELALAASQLPARPEERPTRDQEVGTALLPSLQEEQWRHLDSTQKEQYWDLMLETYGKMVSGVAGISNSKPDLTNMAEYGEELVGLHLHSAEKMARAPCKEDRQENDKENLNLENHRDQGCLDVFDQAPGEAPPQTALSDFFGESEPHHFGGESVPEALENLQGEGTGAHLFPHERGSGKQLGQHIQSSSSGELSALWLEEKREASQKGQARAPMAQKLPTCRECGKTFYRNSQLVFHQRTHTGETYFHCRICKKAFLRSSDFVKHQRTHTGEKPCKCDYCGKGFSDFSGLRHHEKIHTGEKPYKCPICEKSFIQRSNFNRHQRVHTGEKPYKCTHCGKRFSWSSSLDKHQRSHLGKKPCP.

One can recognise an SCAN box domain in the interval 41-123; the sequence is RQLFRQFRYQ…TLVESLKGDP (83 aa). The interval 169 to 195 is disordered; sequence QDLPLQNTSSAPGELLSHGVKEESDLE. The region spanning 218–291 is the KRAB domain; the sequence is EVGTALLPSL…HLHSAEKMAR (74 aa). C2H2-type zinc fingers lie at residues 415-437, 443-465, 471-493, 499-521, and 527-549; these read PTCR…QRTH, FHCR…QRTH, CKCD…EKIH, YKCP…QRVH, and YKCT…QRSH.

Belongs to the krueppel C2H2-type zinc-finger protein family.

It is found in the nucleus. In terms of biological role, may be involved in transcriptional regulation. The polypeptide is Zinc finger protein 18 (Znf18) (Rattus norvegicus (Rat)).